Reading from the N-terminus, the 422-residue chain is 3-phosphoshikimate 1-carboxyvinyltransferase (422 aa).

3-phosphoshikimate-binding residues include Lys20, Ser21, and Arg25. Lys20 serves as a coordination point for phosphoenolpyruvate. 2 residues coordinate phosphoenolpyruvate: Gly92 and Arg120. 6 residues coordinate 3-phosphoshikimate: Ser163, Ser164, Gln165, Ser191, Asp304, and Lys331. Residue Gln165 coordinates phosphoenolpyruvate. The Proton acceptor role is filled by Asp304. The phosphoenolpyruvate site is built by Arg335 and Arg377.

The protein belongs to the EPSP synthase family. Monomer.

The protein resides in the cytoplasm. The catalysed reaction is 3-phosphoshikimate + phosphoenolpyruvate = 5-O-(1-carboxyvinyl)-3-phosphoshikimate + phosphate. It functions in the pathway metabolic intermediate biosynthesis; chorismate biosynthesis. In terms of biological role, catalyzes the transfer of the enolpyruvyl moiety of phosphoenolpyruvate (PEP) to the 5-hydroxyl of shikimate-3-phosphate (S3P) to produce enolpyruvyl shikimate-3-phosphate and inorganic phosphate. The sequence is that of 3-phosphoshikimate 1-carboxyvinyltransferase from Methanocorpusculum labreanum (strain ATCC 43576 / DSM 4855 / Z).